The chain runs to 154 residues: 6,7-dimethyl-8-ribityllumazine synthase (154 aa).

5-amino-6-(D-ribitylamino)uracil-binding positions include F22, 56–58 (AFE), and 81–83 (VLI). 86–87 (ET) provides a ligand contact to (2S)-2-hydroxy-3-oxobutyl phosphate. H89 functions as the Proton donor in the catalytic mechanism. Residue F114 coordinates 5-amino-6-(D-ribitylamino)uracil. (2S)-2-hydroxy-3-oxobutyl phosphate is bound at residue R128.

Belongs to the DMRL synthase family.

It carries out the reaction (2S)-2-hydroxy-3-oxobutyl phosphate + 5-amino-6-(D-ribitylamino)uracil = 6,7-dimethyl-8-(1-D-ribityl)lumazine + phosphate + 2 H2O + H(+). The protein operates within cofactor biosynthesis; riboflavin biosynthesis; riboflavin from 2-hydroxy-3-oxobutyl phosphate and 5-amino-6-(D-ribitylamino)uracil: step 1/2. Its function is as follows. Catalyzes the formation of 6,7-dimethyl-8-ribityllumazine by condensation of 5-amino-6-(D-ribitylamino)uracil with 3,4-dihydroxy-2-butanone 4-phosphate. This is the penultimate step in the biosynthesis of riboflavin. In Chlamydia abortus (strain DSM 27085 / S26/3) (Chlamydophila abortus), this protein is 6,7-dimethyl-8-ribityllumazine synthase.